We begin with the raw amino-acid sequence, 63 residues long: Large ribosomal subunit protein uL29 (63 aa).

This sequence belongs to the universal ribosomal protein uL29 family.

The polypeptide is Large ribosomal subunit protein uL29 (Edwardsiella ictaluri (strain 93-146)).